A 166-amino-acid polypeptide reads, in one-letter code: Gem-associated protein 6 (166 aa).

One can recognise a Sm domain in the interval tryptophan 4 to glycine 73. The AD domain maps to glutamate 68–glutamine 166. Serine 94 and serine 165 each carry phosphoserine.

In terms of assembly, part of the core SMN complex that contains SMN1, GEMIN2/SIP1, DDX20/GEMIN3, GEMIN4, GEMIN5, GEMIN6, GEMIN7, GEMIN8 and STRAP/UNRIP. Part of the SMN-Sm complex that contains SMN1, GEMIN2/SIP1, DDX20/GEMIN3, GEMIN4, GEMIN5, GEMIN6, GEMIN7, GEMIN8, STRAP/UNRIP and the Sm proteins SNRPB, SNRPD1, SNRPD2, SNRPD3, SNRPE, SNRPF and SNRPG. Interacts with GEMIN7; the interaction is direct. Interacts with GEMIN8; the interaction is direct. Interacts with SNRPB, SNRPD2, SNRPD3 and SNRPE; the interaction is direct.

The protein resides in the nucleus. Its subcellular location is the nucleoplasm. It localises to the gem. The protein localises to the cytoplasm. In terms of biological role, the SMN complex catalyzes the assembly of small nuclear ribonucleoproteins (snRNPs), the building blocks of the spliceosome, and thereby plays an important role in the splicing of cellular pre-mRNAs. Most spliceosomal snRNPs contain a common set of Sm proteins SNRPB, SNRPD1, SNRPD2, SNRPD3, SNRPE, SNRPF and SNRPG that assemble in a heptameric protein ring on the Sm site of the small nuclear RNA to form the core snRNP (Sm core). In the cytosol, the Sm proteins SNRPD1, SNRPD2, SNRPE, SNRPF and SNRPG are trapped in an inactive 6S pICln-Sm complex by the chaperone CLNS1A that controls the assembly of the core snRNP. To assemble core snRNPs, the SMN complex accepts the trapped 5Sm proteins from CLNS1A forming an intermediate. Binding of snRNA inside 5Sm triggers eviction of the SMN complex, thereby allowing binding of SNRPD3 and SNRPB to complete assembly of the core snRNP. The sequence is that of Gem-associated protein 6 (Gemin6) from Mus musculus (Mouse).